We begin with the raw amino-acid sequence, 670 residues long: Protein HBS1 (670 aa).

Disordered stretches follow at residues 60 to 88 (KDIQEEEADEDEDEDAAFAKARRDSESFQ) and 164 to 202 (KTVSKTVPTPPPKISLKEPRRGFEIPSPKVPSSPVVSGR). Positions 63 to 75 (QEEEADEDEDEDA) are enriched in acidic residues. Residues 189–200 (PSPKVPSSPVVS) are compositionally biased toward low complexity. A tr-type G domain is found at 245 to 468 (KSHIHMIVIG…DVIENFKIPE (224 aa)). The tract at residues 254-261 (GHVDAGKS) is G1. 254 to 261 (GHVDAGKS) is a GTP binding site. The tract at residues 310–314 (GITMD) is G2. The interval 331–334 (DAPG) is G3. GTP contacts are provided by residues 393-396 (NKLD) and 432-434 (SGL). A G4 region spans residues 393-396 (NKLD). The tract at residues 432–434 (SGL) is G5.

This sequence belongs to the TRAFAC class translation factor GTPase superfamily. Classic translation factor GTPase family. Component of the Pelota-HBS1L complex, also named Dom34-Hbs1 complex, composed of pelo and HBS1. Expressed in ovaries (at protein level).

It localises to the cytoplasm. It catalyses the reaction GTP + H2O = GDP + phosphate + H(+). GTPase component of the Pelota-HBS1L complex, a complex that recognizes stalled ribosomes and triggers the No-Go Decay (NGD) pathway. The Pelota-HBS1L complex recognizes ribosomes stalled at the 3' end of an mRNA and engages stalled ribosomes by destabilizing mRNA in the mRNA channel. Following ribosome-binding, the Pelota-HBS1L complex promotes recruitment of pix, which drives the disassembly of stalled ribosomes, followed by degradation of damaged mRNAs as part of the NGD pathway. Together with pelo, required for transposon silencing in the ovary and testis. Together with pelo, promotes meiosis and spermatid individualization during spermatogenesis. The polypeptide is Protein HBS1 (Drosophila melanogaster (Fruit fly)).